Here is a 183-residue protein sequence, read N- to C-terminus: Peptide deformylase (183 aa).

Residues Cys110 and His153 each coordinate Fe cation. The active site involves Glu154. His157 is a binding site for Fe cation.

Belongs to the polypeptide deformylase family. The cofactor is Fe(2+).

The enzyme catalyses N-terminal N-formyl-L-methionyl-[peptide] + H2O = N-terminal L-methionyl-[peptide] + formate. Removes the formyl group from the N-terminal Met of newly synthesized proteins. Requires at least a dipeptide for an efficient rate of reaction. N-terminal L-methionine is a prerequisite for activity but the enzyme has broad specificity at other positions. This Shouchella clausii (strain KSM-K16) (Alkalihalobacillus clausii) protein is Peptide deformylase.